Consider the following 837-residue polypeptide: AdoMet-dependent rRNA methyltransferase SPB1 (837 aa).

5 residues coordinate S-adenosyl-L-methionine: Gly58, Trp60, Asp78, Asp94, and Asp119. The active-site Proton acceptor is the Lys159. A coiled-coil region spans residues 345–390 (LNEEEQIEKELRDLQEKQKQKQKREKRRKNEEKQKELTRMQMNMLT). Disordered stretches follow at residues 359-381 (QEKQ…QKEL), 483-529 (FRAK…DEDD), 573-644 (TDDV…TTKE), and 779-808 (TKKQ…KGIK). A compositionally biased stretch (basic and acidic residues) spans 372–381 (RKNEEKQKEL). Positions 518 to 529 (ESDDSELSDEDD) are enriched in acidic residues. Residues 593-602 (SYNEMKKEDL) are compositionally biased toward basic and acidic residues. A compositionally biased stretch (acidic residues) spans 603–635 (SDSSDEDSSSESDFEIVANDESDGDIDSDYDSD).

Belongs to the class I-like SAM-binding methyltransferase superfamily. RNA methyltransferase RlmE family. SPB1 subfamily. In terms of assembly, component of the nucleolar and nucleoplasmic pre-60S ribosomal particle.

Its subcellular location is the nucleus. The protein localises to the nucleolus. It carries out the reaction a ribonucleotide in rRNA + S-adenosyl-L-methionine = a 2'-O-methylribonucleotide in rRNA + S-adenosyl-L-homocysteine + H(+). Functionally, required for proper assembly of pre-ribosomal particles during the biogenesis of the 60S ribosomal subunit. In Candida glabrata (strain ATCC 2001 / BCRC 20586 / JCM 3761 / NBRC 0622 / NRRL Y-65 / CBS 138) (Yeast), this protein is AdoMet-dependent rRNA methyltransferase SPB1.